The chain runs to 933 residues: C-1-tetrahydrofolate synthase, cytoplasmic (933 aa).

Residues 1–303 form a methylenetetrahydrofolate dehydrogenase and cyclohydrolase region; that stretch reads MWEPQGSLDP…DRLLAPTWPL (303 aa). Substrate-binding positions include 51–55 and 98–100; these read YIRMK and VQM. NADP(+) contacts are provided by residues 170–172 and S195; that span reads GRS. 270 to 274 provides a ligand contact to substrate; that stretch reads PGGVG. The interval 304 to 933 is formyltetrahydrofolate synthetase; it reads RPLRITPLSP…TKTGEIEGLF (630 aa). An ATP-binding site is contributed by 378–385; sequence TPLGEGKS.

The protein in the N-terminal section; belongs to the tetrahydrofolate dehydrogenase/cyclohydrolase family. In the C-terminal section; belongs to the formate--tetrahydrofolate ligase family. As to quaternary structure, homodimer.

It is found in the cytoplasm. It catalyses the reaction (6R)-5,10-methylene-5,6,7,8-tetrahydrofolate + NADP(+) = (6R)-5,10-methenyltetrahydrofolate + NADPH. It carries out the reaction (6R)-5,10-methenyltetrahydrofolate + H2O = (6R)-10-formyltetrahydrofolate + H(+). The catalysed reaction is (6S)-5,6,7,8-tetrahydrofolate + formate + ATP = (6R)-10-formyltetrahydrofolate + ADP + phosphate. It participates in one-carbon metabolism; tetrahydrofolate interconversion. This chain is C-1-tetrahydrofolate synthase, cytoplasmic, found in Spodoptera frugiperda (Fall armyworm).